The sequence spans 469 residues: 24-hydroxycholesterol 7-alpha-hydroxylase (469 aa).

Positions 1 to 23 (MELISPTVIIILGCLALFLLLQR) are cleaved as a signal peptide. 3 consecutive transmembrane segments (helical) span residues 267–287 (GLLLLWASLSNAVPVAFWTLA), 352–372 (VEILNYIIPSGDLLMLSPFWL), and 412–432 (FQCPARWFALLEVQMCIILIL). Position 414 (C414) interacts with heme.

Belongs to the cytochrome P450 family. Heme is required as a cofactor. In terms of tissue distribution, liver specific.

It localises to the endoplasmic reticulum membrane. The protein resides in the microsome membrane. The catalysed reaction is (24S)-hydroxycholesterol + reduced [NADPH--hemoprotein reductase] + O2 = (24S)-7alpha-dihydroxycholesterol + oxidized [NADPH--hemoprotein reductase] + H2O + H(+). It participates in steroid metabolism; cholesterol degradation. The protein operates within lipid metabolism; bile acid biosynthesis. In terms of biological role, a cytochrome P450 monooxygenase involved in neural cholesterol clearance through bile acid synthesis. Catalyzes 7-alpha hydroxylation of (24S)-hydroxycholesterol, a neural oxysterol that is metabolized to bile acids in the liver. Mechanistically, uses molecular oxygen inserting one oxygen atom into a substrate, and reducing the second into a water molecule, with two electrons provided by NADPH via cytochrome P450 reductase (CPR; NADPH-ferrihemoprotein reductase). This Homo sapiens (Human) protein is 24-hydroxycholesterol 7-alpha-hydroxylase.